An 81-amino-acid chain; its full sequence is Small ribosomal subunit protein bS16 (81 aa).

Belongs to the bacterial ribosomal protein bS16 family.

This is Small ribosomal subunit protein bS16 from Acetivibrio thermocellus (strain ATCC 27405 / DSM 1237 / JCM 9322 / NBRC 103400 / NCIMB 10682 / NRRL B-4536 / VPI 7372) (Clostridium thermocellum).